The primary structure comprises 176 residues: 3-hydroxydecanoyl-[acyl-carrier-protein] dehydratase (176 aa).

Residue H71 is part of the active site.

It belongs to the thioester dehydratase family. FabA subfamily. As to quaternary structure, homodimer.

It localises to the cytoplasm. The enzyme catalyses a (3R)-hydroxyacyl-[ACP] = a (2E)-enoyl-[ACP] + H2O. The catalysed reaction is (3R)-hydroxydecanoyl-[ACP] = (2E)-decenoyl-[ACP] + H2O. It catalyses the reaction (2E)-decenoyl-[ACP] = (3Z)-decenoyl-[ACP]. It participates in lipid metabolism; fatty acid biosynthesis. Its function is as follows. Necessary for the introduction of cis unsaturation into fatty acids. Catalyzes the dehydration of (3R)-3-hydroxydecanoyl-ACP to E-(2)-decenoyl-ACP and then its isomerization to Z-(3)-decenoyl-ACP. Can catalyze the dehydratase reaction for beta-hydroxyacyl-ACPs with saturated chain lengths up to 16:0, being most active on intermediate chain length. The polypeptide is 3-hydroxydecanoyl-[acyl-carrier-protein] dehydratase (Afipia carboxidovorans (strain ATCC 49405 / DSM 1227 / KCTC 32145 / OM5) (Oligotropha carboxidovorans)).